Here is a 273-residue protein sequence, read N- to C-terminus: Dermonecrotic toxin SdSicTox-betaIF1 (273 aa).

Residue His-5 is part of the active site. Residues Glu-25 and Asp-27 each contribute to the Mg(2+) site. Catalysis depends on His-41, which acts as the Nucleophile. 2 disulfides stabilise this stretch: Cys-45–Cys-51 and Cys-47–Cys-189.

This sequence belongs to the arthropod phospholipase D family. Class II subfamily. Mg(2+) is required as a cofactor. Expressed by the venom gland.

Its subcellular location is the secreted. It catalyses the reaction an N-(acyl)-sphingosylphosphocholine = an N-(acyl)-sphingosyl-1,3-cyclic phosphate + choline. It carries out the reaction an N-(acyl)-sphingosylphosphoethanolamine = an N-(acyl)-sphingosyl-1,3-cyclic phosphate + ethanolamine. The catalysed reaction is a 1-acyl-sn-glycero-3-phosphocholine = a 1-acyl-sn-glycero-2,3-cyclic phosphate + choline. The enzyme catalyses a 1-acyl-sn-glycero-3-phosphoethanolamine = a 1-acyl-sn-glycero-2,3-cyclic phosphate + ethanolamine. Dermonecrotic toxins cleave the phosphodiester linkage between the phosphate and headgroup of certain phospholipids (sphingolipid and lysolipid substrates), forming an alcohol (often choline) and a cyclic phosphate. This toxin acts on sphingomyelin (SM). It may also act on ceramide phosphoethanolamine (CPE), lysophosphatidylcholine (LPC) and lysophosphatidylethanolamine (LPE), but not on lysophosphatidylserine (LPS), and lysophosphatidylglycerol (LPG). It acts by transphosphatidylation, releasing exclusively cyclic phosphate products as second products. Induces dermonecrosis, hemolysis, increased vascular permeability, edema, inflammatory response, and platelet aggregation. This is Dermonecrotic toxin SdSicTox-betaIF1 from Sicarius cf. damarensis (strain GJB-2008) (Six-eyed sand spider).